A 159-amino-acid chain; its full sequence is Ribosomal RNA large subunit methyltransferase H (159 aa).

S-adenosyl-L-methionine contacts are provided by residues leucine 76, glycine 108, and 127 to 132 (LSKMTY).

This sequence belongs to the RNA methyltransferase RlmH family. As to quaternary structure, homodimer.

Its subcellular location is the cytoplasm. It catalyses the reaction pseudouridine(1915) in 23S rRNA + S-adenosyl-L-methionine = N(3)-methylpseudouridine(1915) in 23S rRNA + S-adenosyl-L-homocysteine + H(+). Its function is as follows. Specifically methylates the pseudouridine at position 1915 (m3Psi1915) in 23S rRNA. The polypeptide is Ribosomal RNA large subunit methyltransferase H (Ruminiclostridium cellulolyticum (strain ATCC 35319 / DSM 5812 / JCM 6584 / H10) (Clostridium cellulolyticum)).